Reading from the N-terminus, the 168-residue chain is Large ribosomal subunit protein bL9 (168 aa).

Residues 148-168 form a disordered region; that stretch reads ENGEGSVQPAAEAAEVASTEA. Residues 157 to 168 show a composition bias toward low complexity; that stretch reads AAEAAEVASTEA.

The protein belongs to the bacterial ribosomal protein bL9 family.

In terms of biological role, binds to the 23S rRNA. This Herpetosiphon aurantiacus (strain ATCC 23779 / DSM 785 / 114-95) protein is Large ribosomal subunit protein bL9.